A 2002-amino-acid chain; its full sequence is Methylcytosine dioxygenase TET2 (2002 aa).

Over residues 1–11 the composition is skewed to basic and acidic residues; the sequence is MEQDRTNHVEG. Residues 1-22 are disordered; it reads MEQDRTNHVEGNRLSPFLIPSP. Serine 15, serine 75, and serine 99 each carry phosphoserine. Residues 113–124 are compositionally biased toward basic and acidic residues; sequence KQDQKANGERRN. 7 disordered regions span residues 113 to 154, 266 to 287, 349 to 368, 390 to 488, 703 to 748, 930 to 949, and 1075 to 1095; these read KQDQ…VSSV, HPSHTSGQINSAQTSNSELPPK, GEEFCSGSSSNLQAPGGSSE, DSFS…VNRN, LNQQ…QQKL, VPDQGGSHTQTPPQKDTQKH, and DSHTPALEQQTTSSEKTPTKR. Polar residues-rich tracts occupy residues 126-143 and 267-283; these read GVSQERNPGESSQPNVSD and PSHTSGQINSAQTSNSE. A compositionally biased stretch (pro residues) spans 397 to 416; sequence TPPPPSQLLLSPPPPLPQVP. 2 stretches are compositionally biased toward polar residues: residues 479–488 and 703–718; these read RPQNNCVNRN and LNQQASETEPFSNSHL. The span at 731–748 shows a compositional bias: low complexity; sequence QPSQSSHLPQNQQQQQKL. Composition is skewed to polar residues over residues 935–944 and 1081–1095; these read GSHTQTPPQK and LEQQTTSSEKTPTKR. Serine 1107 and serine 1109 each carry phosphoserine. Zn(2+)-binding residues include cysteine 1133, cysteine 1135, cysteine 1193, histidine 1219, and cysteine 1221. Residue arginine 1261 participates in 2-oxoglutarate binding. Positions 1271, 1273, 1289, and 1298 each coordinate Zn(2+). Residues 1290–1303 form an interaction with DNA region; sequence SWSMYYNGCKFARS. A Glycyl lysine isopeptide (Lys-Gly) (interchain with G-Cter in ubiquitin) cross-link involves residue lysine 1299. Cysteine 1358 is a binding site for Zn(2+). A 2-oxoglutarate-binding site is contributed by cysteine 1374. Position 1380 (histidine 1380) interacts with Zn(2+). Fe cation is bound by residues histidine 1382 and aspartate 1384. Asparagine 1387 contacts substrate. Histidine 1416 is a binding site for 2-oxoglutarate. 2 disordered regions span residues 1475 to 1507 and 1521 to 1587; these read AAEKLSSLENSSNKNEKEKSAPSRTKQTENASQ and VMQQ…HTSD. The segment covering 1477 to 1487 has biased composition (low complexity); that stretch reads EKLSSLENSSN. Over residues 1496–1507 the composition is skewed to polar residues; it reads PSRTKQTENASQ. 2 stretches are compositionally biased toward low complexity: residues 1523–1532 and 1539–1551; these read QQSQQPQPLQ and QQQQRPQQQQPHH. A compositionally biased stretch (polar residues) spans 1554-1568; it reads TESVNSYSASGSTNP. Arginine 1682 carries the post-translational modification Asymmetric dimethylarginine. Position 1881 (histidine 1881) interacts with Fe cation. 1896-1898 contributes to the 2-oxoglutarate binding site; sequence RIS. Substrate is bound at residue 1902-1904; the sequence is YQH. Position 1912 (histidine 1912) interacts with Zn(2+). The tract at residues 1932 to 1961 is disordered; that stretch reads CEKYGPDYVPQKSHGKKVKREPAEPHETSE. Basic and acidic residues predominate over residues 1951-1960; that stretch reads REPAEPHETS.

It belongs to the TET family. As to quaternary structure, interacts with HCFC1. Interacts with OGT. Interacts with PROSER1; this interaction mediates TET2 O-GlcNAcylation and stability by promoting the interaction between OGT and TET2. Directly interacts (via C-terminus) with the DCAF1 component of the CRL4(VprBP) E3 ubiquitin-protein ligase complex. It depends on Fe(2+) as a cofactor. The cofactor is Zn(2+). In terms of processing, may be glycosylated. It is unclear whether interaction with OGT leads to GlcNAcylation. According to a report, it is not GlcNAcylated by OGT. In contrast, another group reports GlcNAcylation by OGT in mouse ortholog. Post-translationally, monoubiquitinated at Lys-1299 by the DCX (DDB1-CUL4-X-box) E3 ubiquitin-protein ligase complex called CRL4(VprBP) or CUL4A-RBX1-DDB1-DCAF1/VPRBP complex; this modification promotes binding to DNA. Acetylated. Deacetylase HDAC6 acts as a valine sensor by binding to valine through its primate-specific SE14 repeat region and deacetylates TET2 following valine deprivation which promotes TET2-dependent DNA demethylation. In terms of tissue distribution, broadly expressed. Highly expressed in hematopoietic cells; highest expression observed in granulocytes. Expression is reduced in granulocytes from peripheral blood of patients affected by myelodysplastic syndromes.

It localises to the nucleus. It is found in the chromosome. The catalysed reaction is a 5-methyl-2'-deoxycytidine in DNA + 2-oxoglutarate + O2 = a 5-hydroxymethyl-2'-deoxycytidine in DNA + succinate + CO2. The enzyme catalyses a 5-hydroxymethyl-2'-deoxycytidine in DNA + 2-oxoglutarate + O2 = a 5-formyl-2'-deoxycytidine in DNA + succinate + CO2 + H2O. It carries out the reaction a 5-formyl-2'-deoxycytidine in DNA + 2-oxoglutarate + O2 = a 5-carboxyl-2'-deoxycytidine in DNA + succinate + CO2 + H(+). Its function is as follows. Dioxygenase that catalyzes the conversion of the modified genomic base 5-methylcytosine (5mC) into 5-hydroxymethylcytosine (5hmC) and plays a key role in active DNA demethylation. Has a preference for 5-hydroxymethylcytosine in CpG motifs. Also mediates subsequent conversion of 5hmC into 5-formylcytosine (5fC), and conversion of 5fC to 5-carboxylcytosine (5caC). Conversion of 5mC into 5hmC, 5fC and 5caC probably constitutes the first step in cytosine demethylation. Methylation at the C5 position of cytosine bases is an epigenetic modification of the mammalian genome which plays an important role in transcriptional regulation. In addition to its role in DNA demethylation, also involved in the recruitment of the O-GlcNAc transferase OGT to CpG-rich transcription start sites of active genes, thereby promoting histone H2B GlcNAcylation by OGT. This Homo sapiens (Human) protein is Methylcytosine dioxygenase TET2 (TET2).